A 289-amino-acid chain; its full sequence is Diaminopimelate epimerase (289 aa).

Asparagine 11 and asparagine 78 together coordinate substrate. The active-site Proton donor is the cysteine 87. Substrate contacts are provided by residues 88–89 (GN), asparagine 163, asparagine 199, and 217–218 (ER). Cysteine 226 serves as the catalytic Proton acceptor. 227–228 (GT) is a substrate binding site.

Belongs to the diaminopimelate epimerase family. Homodimer.

Its subcellular location is the cytoplasm. It catalyses the reaction (2S,6S)-2,6-diaminopimelate = meso-2,6-diaminopimelate. The protein operates within amino-acid biosynthesis; L-lysine biosynthesis via DAP pathway; DL-2,6-diaminopimelate from LL-2,6-diaminopimelate: step 1/1. Functionally, catalyzes the stereoinversion of LL-2,6-diaminopimelate (L,L-DAP) to meso-diaminopimelate (meso-DAP), a precursor of L-lysine and an essential component of the bacterial peptidoglycan. The sequence is that of Diaminopimelate epimerase from Mycolicibacterium gilvum (strain PYR-GCK) (Mycobacterium gilvum (strain PYR-GCK)).